The sequence spans 220 residues: 7-carboxy-7-deazaguanine synthase (220 aa).

Residues 16-18 (IQG) and R31 each bind substrate. One can recognise a Radical SAM core domain in the interval 22–215 (FAGWPCAFVR…LQLHKYIWNP (194 aa)). Residues C35, C39, and C42 each contribute to the [4Fe-4S] cluster site. Residue T44 coordinates Mg(2+). Residue T74 participates in substrate binding. G76 is a binding site for S-adenosyl-L-methionine.

This sequence belongs to the radical SAM superfamily. 7-carboxy-7-deazaguanine synthase family. In terms of assembly, homodimer. [4Fe-4S] cluster serves as cofactor. The cofactor is S-adenosyl-L-methionine. Mg(2+) is required as a cofactor.

The enzyme catalyses 6-carboxy-5,6,7,8-tetrahydropterin + H(+) = 7-carboxy-7-deazaguanine + NH4(+). It participates in purine metabolism; 7-cyano-7-deazaguanine biosynthesis. In terms of biological role, catalyzes the complex heterocyclic radical-mediated conversion of 6-carboxy-5,6,7,8-tetrahydropterin (CPH4) to 7-carboxy-7-deazaguanine (CDG), a step common to the biosynthetic pathways of all 7-deazapurine-containing compounds. This Chlorobaculum tepidum (strain ATCC 49652 / DSM 12025 / NBRC 103806 / TLS) (Chlorobium tepidum) protein is 7-carboxy-7-deazaguanine synthase.